A 367-amino-acid polypeptide reads, in one-letter code: Phosphoribosylaminoimidazole-succinocarboxamide synthase (367 aa).

Belongs to the SAICAR synthetase family.

It catalyses the reaction 5-amino-1-(5-phospho-D-ribosyl)imidazole-4-carboxylate + L-aspartate + ATP = (2S)-2-[5-amino-1-(5-phospho-beta-D-ribosyl)imidazole-4-carboxamido]succinate + ADP + phosphate + 2 H(+). It functions in the pathway purine metabolism; IMP biosynthesis via de novo pathway; 5-amino-1-(5-phospho-D-ribosyl)imidazole-4-carboxamide from 5-amino-1-(5-phospho-D-ribosyl)imidazole-4-carboxylate: step 1/2. This Shewanella sp. (strain ANA-3) protein is Phosphoribosylaminoimidazole-succinocarboxamide synthase.